We begin with the raw amino-acid sequence, 892 residues long: Inner centromere protein B (892 aa).

Disordered regions lie at residues 50-124 (AEPE…KRMT), 160-182 (EHER…EMKT), 255-286 (LVNE…SLVV), 305-470 (KRES…PPPH), 502-555 (KRNT…RRED), 569-687 (QLEE…RERE), 702-760 (ERAA…AAAA), and 797-819 (NYGM…KPIP). Positions 60–69 (SQKRRRKKRT) are enriched in basic residues. Residues 90–99 (SANWSSSVRR) are compositionally biased toward low complexity. The span at 259–272 (QPLNLSNESATPTG) shows a compositional bias: polar residues. The span at 305-315 (KRESMTREAVR) shows a compositional bias: basic and acidic residues. Positions 316-326 (KSIRQSISKKK) are enriched in basic residues. Over residues 332 to 343 (SSTSSQRSCHSS) the composition is skewed to low complexity. Residues 431–444 (RAVDELSDDERPSE) show a composition bias toward basic and acidic residues. A compositionally biased stretch (pro residues) spans 455-470 (PSPPCPPSKIVKPPPH). Composition is skewed to basic and acidic residues over residues 509–555 (PDPK…RRED), 569–602 (QLEE…EEKA), 609–687 (KKQE…RERE), and 702–754 (ERAA…KAKE). An SAH region spans residues 512-725 (KSEEKERQRL…EERKKREQQQ (214 aa)). Residues 802–876 (LNSDDSTDDE…RTSSAVWHSP (75 aa)) form an IN box region. A phosphoserine mark is found at S869 and S870.

Belongs to the INCENP family. In terms of assembly, component of the CPC at least composed of survivin/birc5, incenp, cdca8/borealin and/or cdca9/dasra-A, and aurkb/aurora-B. Interacts (via C-terminus) with aurkb (via N-terminus and kinase domain). Interacts (via N-terminus) with birc5.1, birc5.2, cdca8 and cdca9. Interacts with mtus1.

The protein resides in the nucleus. It localises to the chromosome. The protein localises to the centromere. Its subcellular location is the cytoplasm. It is found in the cytoskeleton. The protein resides in the spindle. It localises to the midbody. The protein localises to the kinetochore. Functionally, component of the chromosomal passenger complex (CPC), a complex that acts as a key regulator of mitosis. The CPC complex has essential functions at the centromere in ensuring correct chromosome alignment and segregation and is required for chromatin-induced microtubule stabilization and spindle assembly. Acts as a scaffold regulating CPC localization and activity. The C-terminus associates with aurkb/aurora-B, the N-terminus associated with cdca8/borealin and/or cdca9/dasra-A tethers the CPC to the inner centromere, and the microtubule binding activity within the central SAH domain directs aurkb/aurora-B toward substrates near microtubules. Activates aurkb. The chain is Inner centromere protein B (incenp-b) from Xenopus laevis (African clawed frog).